The sequence spans 420 residues: uncharacterized protein (420 aa).

The protein belongs to the asfivirus K421R family.

It localises to the virion. This is an uncharacterized protein from Ornithodoros (relapsing fever ticks).